A 485-amino-acid chain; its full sequence is tRNA sulfurtransferase (485 aa).

Positions 61–165 (EELIALLQRI…DDKMMLVKTR (105 aa)) constitute a THUMP domain. Residues 183–184 (LI), lysine 265, glycine 287, and glutamine 296 contribute to the ATP site. Cysteine 344 and cysteine 456 form a disulfide bridge. The 80-residue stretch at 404-483 (LGENEVILDI…FSNVRVFAKN (80 aa)) folds into the Rhodanese domain. Catalysis depends on cysteine 456, which acts as the Cysteine persulfide intermediate.

It belongs to the ThiI family.

The protein localises to the cytoplasm. It carries out the reaction [ThiI sulfur-carrier protein]-S-sulfanyl-L-cysteine + a uridine in tRNA + 2 reduced [2Fe-2S]-[ferredoxin] + ATP + H(+) = [ThiI sulfur-carrier protein]-L-cysteine + a 4-thiouridine in tRNA + 2 oxidized [2Fe-2S]-[ferredoxin] + AMP + diphosphate. It catalyses the reaction [ThiS sulfur-carrier protein]-C-terminal Gly-Gly-AMP + S-sulfanyl-L-cysteinyl-[cysteine desulfurase] + AH2 = [ThiS sulfur-carrier protein]-C-terminal-Gly-aminoethanethioate + L-cysteinyl-[cysteine desulfurase] + A + AMP + 2 H(+). It functions in the pathway cofactor biosynthesis; thiamine diphosphate biosynthesis. In terms of biological role, catalyzes the ATP-dependent transfer of a sulfur to tRNA to produce 4-thiouridine in position 8 of tRNAs, which functions as a near-UV photosensor. Also catalyzes the transfer of sulfur to the sulfur carrier protein ThiS, forming ThiS-thiocarboxylate. This is a step in the synthesis of thiazole, in the thiamine biosynthesis pathway. The sulfur is donated as persulfide by IscS. In Haemophilus influenzae (strain 86-028NP), this protein is tRNA sulfurtransferase.